A 334-amino-acid chain; its full sequence is Probable 3-hydroxyisobutyrate dehydrogenase-like 1, mitochondrial (334 aa).

Residues 1 to 23 (MPLLLRRFPSPSVVSSFFLRRSM) constitute a mitochondrion transit peptide. At Ala-24 the chain carries N-acetylalanine. Residues 38-67 (TKIG…TVFN) and Thr-133 contribute to the NAD(+) site. The active site involves Lys-207. Residue Lys-275 coordinates NAD(+).

It belongs to the HIBADH-related family. 3-hydroxyisobutyrate dehydrogenase subfamily.

Its subcellular location is the mitochondrion. The enzyme catalyses 3-hydroxy-2-methylpropanoate + NAD(+) = 2-methyl-3-oxopropanoate + NADH + H(+). It functions in the pathway amino-acid degradation; L-valine degradation. The protein is Probable 3-hydroxyisobutyrate dehydrogenase-like 1, mitochondrial of Arabidopsis thaliana (Mouse-ear cress).